The chain runs to 688 residues: Envelope glycoprotein gp70 (688 aa).

The N-terminal stretch at M1–G98 is a signal peptide. At E99–Y624 the chain is on the extracellular side. N127 and N143 each carry an N-linked (GlcNAc...) asparagine; by host glycan. Residues L426 to S474 are a coiled coil. The propeptide occupies K455 to R456. The fusion peptide stretch occupies residues F457–V477. Positions L463–A481 are immunosuppression. N498 is a glycosylation site (N-linked (GlcNAc...) asparagine; by host). Positions L511–R541 form a coiled coil. Residue N557 is glycosylated (N-linked (GlcNAc...) asparagine; by host). Residues F625–V645 form a helical membrane-spanning segment. Over F646–T688 the chain is Cytoplasmic.

As to quaternary structure, the mature envelope protein (Env) consists of a trimer of SU-TM heterodimers attached by non-covalent interactions or by a labile interchain disulfide bond. Specific enzymatic cleavages in vivo yield mature proteins. Envelope glycoproteins are synthesized as an inactive precursor that is N-glycosylated and processed likely by host cell furin or by a furin-like protease in the Golgi to yield the mature SU and TM proteins. The cleavage site between SU and TM requires the minimal sequence [KR]-X-[KR]-R.

The protein localises to the virion membrane. It localises to the host cell membrane. Functionally, the surface protein (SU) attaches the virus to the host cell by binding to its receptor. This interaction triggers the refolding of the transmembrane protein (TM) and is thought to activate its fusogenic potential by unmasking its fusion peptide. Fusion occurs at the host cell plasma membrane. The transmembrane protein (TM) acts as a class I viral fusion protein. Under the current model, the protein has at least 3 conformational states: pre-fusion native state, pre-hairpin intermediate state, and post-fusion hairpin state. During viral and target cell membrane fusion, the coiled coil regions (heptad repeats) assume a trimer-of-hairpins structure, positioning the fusion peptide in close proximity to the C-terminal region of the ectodomain. The formation of this structure appears to drive apposition and subsequent fusion of viral and target cell membranes. Membranes fusion leads to delivery of the nucleocapsid into the cytoplasm. This chain is Envelope glycoprotein gp70 (env), found in Mouse mammary tumor virus (strain C3H) (MMTV).